The following is a 409-amino-acid chain: Phosphopentomutase (409 aa).

Residues D10, D308, H313, D349, H350, and H361 each contribute to the Mn(2+) site.

This sequence belongs to the phosphopentomutase family. Mn(2+) is required as a cofactor.

It is found in the cytoplasm. The enzyme catalyses 2-deoxy-alpha-D-ribose 1-phosphate = 2-deoxy-D-ribose 5-phosphate. It catalyses the reaction alpha-D-ribose 1-phosphate = D-ribose 5-phosphate. The protein operates within carbohydrate degradation; 2-deoxy-D-ribose 1-phosphate degradation; D-glyceraldehyde 3-phosphate and acetaldehyde from 2-deoxy-alpha-D-ribose 1-phosphate: step 1/2. Functionally, isomerase that catalyzes the conversion of deoxy-ribose 1-phosphate (dRib-1-P) and ribose 1-phosphate (Rib-1-P) to deoxy-ribose 5-phosphate (dRib-5-P) and ribose 5-phosphate (Rib-5-P), respectively. This Buchnera aphidicola subsp. Schizaphis graminum (strain Sg) protein is Phosphopentomutase.